Consider the following 170-residue polypeptide: ATP synthase subunit b (170 aa).

A helical transmembrane segment spans residues 25–45; it reads LIPNGTFFAVLIIFLIVLGVI. The interval 121-147 is disordered; sequence EVAQTLTQADQQLSAQGDQVRSGLESS. Residues 122 to 139 show a composition bias toward polar residues; sequence VAQTLTQADQQLSAQGDQ.

Belongs to the ATPase B chain family. F-type ATPases have 2 components, F(1) - the catalytic core - and F(0) - the membrane proton channel. F(1) has five subunits: alpha(3), beta(3), gamma(1), delta(1), epsilon(1). F(0) has three main subunits: a(1), b(2) and c(10-14). The alpha and beta chains form an alternating ring which encloses part of the gamma chain. F(1) is attached to F(0) by a central stalk formed by the gamma and epsilon chains, while a peripheral stalk is formed by the delta and b chains.

The protein localises to the cell membrane. Functionally, f(1)F(0) ATP synthase produces ATP from ADP in the presence of a proton or sodium gradient. F-type ATPases consist of two structural domains, F(1) containing the extramembraneous catalytic core and F(0) containing the membrane proton channel, linked together by a central stalk and a peripheral stalk. During catalysis, ATP synthesis in the catalytic domain of F(1) is coupled via a rotary mechanism of the central stalk subunits to proton translocation. Component of the F(0) channel, it forms part of the peripheral stalk, linking F(1) to F(0). This is ATP synthase subunit b from Mycolicibacterium smegmatis (strain ATCC 700084 / mc(2)155) (Mycobacterium smegmatis).